Consider the following 467-residue polypeptide: Fumarate hydratase class II (467 aa).

Residues 99–101 (SGT), 130–133 (HPND), 140–142 (SSN), and Thr-188 each bind substrate. Residue His-189 is the Proton donor/acceptor of the active site. Residue Ser-319 is part of the active site. Residues Ser-320 and 325–327 (KVN) contribute to the substrate site.

This sequence belongs to the class-II fumarase/aspartase family. Fumarase subfamily. Homotetramer.

The protein localises to the cytoplasm. It catalyses the reaction (S)-malate = fumarate + H2O. It participates in carbohydrate metabolism; tricarboxylic acid cycle; (S)-malate from fumarate: step 1/1. In terms of biological role, involved in the TCA cycle. Catalyzes the stereospecific interconversion of fumarate to L-malate. This is Fumarate hydratase class II from Thermosynechococcus vestitus (strain NIES-2133 / IAM M-273 / BP-1).